A 294-amino-acid chain; its full sequence is Bifunctional protein FolD (294 aa).

Residues 166-168, S191, and I232 each bind NADP(+); that span reads GRS.

The protein belongs to the tetrahydrofolate dehydrogenase/cyclohydrolase family. As to quaternary structure, homodimer.

It carries out the reaction (6R)-5,10-methylene-5,6,7,8-tetrahydrofolate + NADP(+) = (6R)-5,10-methenyltetrahydrofolate + NADPH. The catalysed reaction is (6R)-5,10-methenyltetrahydrofolate + H2O = (6R)-10-formyltetrahydrofolate + H(+). It participates in one-carbon metabolism; tetrahydrofolate interconversion. Its function is as follows. Catalyzes the oxidation of 5,10-methylenetetrahydrofolate to 5,10-methenyltetrahydrofolate and then the hydrolysis of 5,10-methenyltetrahydrofolate to 10-formyltetrahydrofolate. In Bradyrhizobium sp. (strain BTAi1 / ATCC BAA-1182), this protein is Bifunctional protein FolD.